The primary structure comprises 518 residues: MHRIRTIDSDFGKKRQKKMDNHISSMIYEIKFHEFVLFILEKKMGATRRTFLTDLARKKGFRVENELSNSVTHIVAENNSGSDVLAWLKTHKMEKTTQFELLDISWLIECMKVGKPVDTKGKYQLMESRVDSANPDPTAGTLNILPPTTKTISQYACQRRTTINNHNQRFTDAFEILAKNYEFKENDDTCLTFMRAISVLKCLPFEVVSLKDTEGLPWIGDEVKGIMEEIIEDGESLEVQAVLNDERYQSFKLFTSVFGVGLKTADKWYRMGFRTLNKIRSDKTLKLTKMQKAGLCYYEDLIDCVSKAEADAVSLLVQDAVWTFLPDALVTITGGFRRGKEFGHDVDFLITSPGAEKEQEDQLLQKVTNLWKKQGLLLYCDLIESTFEDLKLPSRKIDALDHFQKCFLILKLYHHKEDKRKWEMPTGSNESEAKSWKAIRVDLVVCPYDRYAFALLGWSGSRQFERDLRRYATHEKKMMLDNHALYDKTKKIFLKAKSEEEIFAHLGLEYIQPSERNA.

A Nuclear localization signal motif is present at residues 11–17 (FGKKRQK). One can recognise a BRCT domain in the interval 27–124 (IYEIKFHEFV…KPVDTKGKYQ (98 aa)). A mediates interaction with DNTTIP2 region spans residues 153–518 (SQYACQRRTT…EYIQPSERNA (366 aa)). The interval 260-264 (VGLKT) is involved in DNA binding. A 2'-deoxyribonucleoside 5'-triphosphate-binding positions include 335–340 (GFRRGK) and 344–347 (HDVD). Mg(2+) contacts are provided by Asp-345, Asp-347, and Asp-442. Position 457 to 458 (457 to 458 (GW)) interacts with a 2'-deoxyribonucleoside 5'-triphosphate.

The protein belongs to the DNA polymerase type-X family. Interacts with PRP19 and DNTTIP1. Interacts with TRERF1. Forms a ternary complex with DNTTIP2 and core histone. Released from this complex by PCNA. Mg(2+) serves as cofactor.

The protein localises to the nucleus. It carries out the reaction DNA(n) + a 2'-deoxyribonucleoside 5'-triphosphate = DNA(n+1) + diphosphate. Its function is as follows. Template-independent DNA polymerase which catalyzes the random addition of deoxynucleoside 5'-triphosphate to the 3'-end of a DNA initiator. One of the in vivo functions of this enzyme is the addition of nucleotides at the junction (N region) of rearranged Ig heavy chain and T-cell receptor gene segments during the maturation of B- and T-cells. The chain is DNA nucleotidylexotransferase (DNTT) from Monodelphis domestica (Gray short-tailed opossum).